The sequence spans 148 residues: Ribosome maturation factor RimP (148 aa).

The protein belongs to the RimP family.

The protein resides in the cytoplasm. Functionally, required for maturation of 30S ribosomal subunits. The polypeptide is Ribosome maturation factor RimP (Treponema denticola (strain ATCC 35405 / DSM 14222 / CIP 103919 / JCM 8153 / KCTC 15104)).